Consider the following 854-residue polypeptide: MVQRWLYSTNAKDIAVLYFMLAIFSGMAGTAMSLIIRLELAAPGSQYLHGNSQLFNVLVVGHAVLMIFCAPFRLIYHCIEVLIDKHISVYSINENFTVSFWFWLLVVTYMVFRYVNHMAYPVGANSTGTMACHKSAGVKQPAQGKNCPMARLTNSCKECLGFSLTPSHLGIVIHAYVLEEEVHELTKNESLALSKSWHLEGCTSSNGKLRNTGLSERGNPGDNGVFMVPKFNLNKVRYFSTLSKLNARKEDSLAYLTKINTTDFSELNKLMENNHNKTETINTRILKLMSDIRMLLIAYNKIKSKKGNMSKGSNNITLDGINISYLNKLSKDINTNMFKFSPVRRVEIPKTSGGFRPLSVGNPREKIVQESMRMMLEIIYNNSFSYYSHGFRPNLSCLTAIIQCKNYMQYCNWFIKVDLNKCFDTIPHNMLINVLNERIKDKGFMDLLYKLLRAGYVDKNNNYHNTTLGIPQGSVVSPILCNIFLDKLDKYLENKFENEFNTGNMSNRGRNPIYNSLSSKIYRCKLLSEKLKLIRLRDHYQRNMGSDKSFKRAYFVRYADDIIIGVMGSHNDCKNILNDINNFLKENLGMSINMDKSVIKHSKEGVSFLGYDVKVTPWEKRPYRMIKKGDNFIRVRHHTSLVVNAPIRSIVMKLNKHGYCSHGILGKPRGVGRLIHEEMKTILMHYLAVGRGIMNYYRLATNFTTLRGRITYILFYSCCLTLARKFKLNTVKKVILKFGKVLVDPHSKVSFSIDDFKIRHKMNMTDSNYTPDEILDRYKYMLPRSLSLFSGICQICGSKHDLEVHHVRTLNNAANKIKDDYLLGRMIKMNRKQITICKTCHFKVHQGKYNGPGL.

A Reverse transcriptase domain is found at Leu329–Val613.

The protein localises to the mitochondrion. The chain is Putative COX1/OXI3 intron 2 protein (AI2) from Saccharomyces cerevisiae (strain ATCC 204508 / S288c) (Baker's yeast).